The following is a 361-amino-acid chain: 5-formaminoimidazole-4-carboxamide-1-(beta)-D-ribofuranosyl 5'-monophosphate synthetase (361 aa).

His-27 and Ser-94 together coordinate 5-amino-1-(5-phospho-beta-D-ribosyl)imidazole-4-carboxamide. Positions 116-348 (RAILRWEAER…MGQRIAKEIK (233 aa)) constitute an ATP-grasp domain. Residues 146-208 (PDEI…ANYC) and Glu-230 each bind ATP. Asn-258 contributes to the 5-amino-1-(5-phospho-beta-D-ribosyl)imidazole-4-carboxamide binding site. Gln-297 and Glu-310 together coordinate Mg(2+).

It belongs to the phosphohexose mutase family. Mg(2+) serves as cofactor. It depends on Mn(2+) as a cofactor.

The catalysed reaction is 5-amino-1-(5-phospho-beta-D-ribosyl)imidazole-4-carboxamide + formate + ATP = 5-formamido-1-(5-phospho-D-ribosyl)imidazole-4-carboxamide + ADP + phosphate. It participates in purine metabolism; IMP biosynthesis via de novo pathway; 5-formamido-1-(5-phospho-D-ribosyl)imidazole-4-carboxamide from 5-amino-1-(5-phospho-D-ribosyl)imidazole-4-carboxamide (formate route): step 1/1. Catalyzes the ATP- and formate-dependent formylation of 5-aminoimidazole-4-carboxamide-1-beta-d-ribofuranosyl 5'-monophosphate (AICAR) to 5-formaminoimidazole-4-carboxamide-1-beta-d-ribofuranosyl 5'-monophosphate (FAICAR) in the absence of folates. The protein is 5-formaminoimidazole-4-carboxamide-1-(beta)-D-ribofuranosyl 5'-monophosphate synthetase of Methanococcus vannielii (strain ATCC 35089 / DSM 1224 / JCM 13029 / OCM 148 / SB).